Here is a 423-residue protein sequence, read N- to C-terminus: Probable M18 family aminopeptidase 2 (423 aa).

The Zn(2+) site is built by His84, His157, and His397.

Belongs to the peptidase M18 family. Zn(2+) is required as a cofactor.

The polypeptide is Probable M18 family aminopeptidase 2 (apeB) (Borreliella burgdorferi (strain ATCC 35210 / DSM 4680 / CIP 102532 / B31) (Borrelia burgdorferi)).